Consider the following 421-residue polypeptide: MFTIITGAQFGDEGKGKIVDLLAEKYDIIARFQGGDNAGHTVKVGDKTYKLHLVPSGVLFDKRLLIGPGVVLNPKVLWEELQTLWGMGMKVDLGIDPKTSIIMPYHIEMDALREKARTAKIGTTRRGIGYAYIDKIAREEVQMADITDPEMLKRKLEEIAPAKESAIKEMGGDPSVVRDEAQLRAYLEIGRALKNNLTDVSLEINRALDEDKMVLAEGAQGAFLDVIHGTQKFVTSSFTTAGSACANLGVGPVRVDNVVGVVKAYITRVGEGPMPTELKDEIGDRLREAGGEYGTTTGRPRRCGWFDAVLGRKAVYLNGYTELALTKLDVLTGLRRIKICVAYELDGEILEYPPESTYELARCVPVYEEMEGWSESISEALDYSDLPQNARAYVERIQELMDVDIAAISVGPAREQTIYME.

Residues 11 to 17 (GDEGKGK) and 39 to 41 (GHT) each bind GTP. D12 (proton acceptor) is an active-site residue. Mg(2+)-binding residues include D12 and G39. IMP is bound by residues 12–15 (DEGK), 37–40 (NAGH), T124, R138, Q220, T235, and R299. Catalysis depends on H40, which acts as the Proton donor. 295–301 (TTTGRPR) contributes to the substrate binding site. GTP contacts are provided by residues R301, 327–329 (KLD), and 409–411 (SVG).

The protein belongs to the adenylosuccinate synthetase family. As to quaternary structure, homodimer. It depends on Mg(2+) as a cofactor.

The protein resides in the cytoplasm. It carries out the reaction IMP + L-aspartate + GTP = N(6)-(1,2-dicarboxyethyl)-AMP + GDP + phosphate + 2 H(+). Its pathway is purine metabolism; AMP biosynthesis via de novo pathway; AMP from IMP: step 1/2. In terms of biological role, plays an important role in the de novo pathway of purine nucleotide biosynthesis. Catalyzes the first committed step in the biosynthesis of AMP from IMP. This is Adenylosuccinate synthetase from Methanothrix thermoacetophila (strain DSM 6194 / JCM 14653 / NBRC 101360 / PT) (Methanosaeta thermophila).